The chain runs to 308 residues: Phenylcoumaran benzylic ether reductase Betv6 (308 aa).

NADP(+)-binding positions include 11–17 (GGTGYIG), R36, and K45. K133 acts as the Proton acceptor in catalysis. R137 provides a ligand contact to NADP(+).

It belongs to the NmrA-type oxidoreductase family. Isoflavone reductase subfamily.

It catalyses the reaction (-)-dehydrodiconiferyl alcohol + NADPH + H(+) = (S)-isodihydrodehydrodiconiferyl alcohol + NADP(+). The catalysed reaction is (+)-dehydrodiconiferyl alcohol + NADPH + H(+) = (R)-isodihydrodehydrodiconiferyl alcohol + NADP(+). Its function is as follows. Oxidoreductase involved in lignan biosynthesis. Catalyzes the NADPH-dependent reduction of phenylcoumaran benzylic ethers. Converts dehydrodiconiferyl alcohol (DDC) to isodihydrodehydrodiconiferyl alcohol (IDDDC). The protein is Phenylcoumaran benzylic ether reductase Betv6 of Betula pendula (European white birch).